We begin with the raw amino-acid sequence, 301 residues long: ADP,ATP carrier protein 1 (301 aa).

3 Solcar repeats span residues 8–100 (YGFA…YKQV), 113–203 (RYFL…AKGM), and 210–299 (TSIF…VKAL). The next 5 membrane-spanning stretches (helical) occupy residues 10 to 39 (FAKD…LLLQ), 77 to 101 (LANV…KQVF), 112 to 132 (WRYF…SLCF), 181 to 201 (VSVQ…DTAK), and 213 to 233 (FVSW…SYPF). The ADP site is built by R82 and K94. R237 contacts ADP. The tract at residues 237-242 (RRRMMM) is important for transport activity. A Nucleotide carrier signature motif motif is present at residues 237–242 (RRRMMM). The helical transmembrane segment at 276–293 (AFSNVLRGTGGALVLVFY) threads the bilayer.

This sequence belongs to the mitochondrial carrier (TC 2.A.29) family. As to quaternary structure, monomer.

The protein localises to the mitochondrion inner membrane. The enzyme catalyses ADP(in) + ATP(out) = ADP(out) + ATP(in). Its activity is regulated as follows. The matrix-open state (m-state) is inhibited by the membrane-permeable bongkrekic acid (BKA). The cytoplasmic-open state (c-state) is inhibited by the membrane-impermeable toxic inhibitor carboxyatractyloside (CATR). In terms of biological role, ADP:ATP antiporter that mediates import of ADP into the mitochondrial matrix for ATP synthesis, and export of ATP out to fuel the cell. Cycles between the cytoplasmic-open state (c-state) and the matrix-open state (m-state): operates by the alternating access mechanism with a single substrate-binding site intermittently exposed to either the cytosolic (c-state) or matrix (m-state) side of the inner mitochondrial membrane. This chain is ADP,ATP carrier protein 1, found in Anopheles gambiae (African malaria mosquito).